The primary structure comprises 208 residues: Large ribosomal subunit protein uL3 (208 aa).

Positions 134 to 159 are disordered; that stretch reads SKFHREAGSTGHCTTPGRSFKNTTMP. The segment covering 144-158 has biased composition (polar residues); the sequence is GHCTTPGRSFKNTTM.

It belongs to the universal ribosomal protein uL3 family. As to quaternary structure, part of the 50S ribosomal subunit. Forms a cluster with proteins L14 and L19.

One of the primary rRNA binding proteins, it binds directly near the 3'-end of the 23S rRNA, where it nucleates assembly of the 50S subunit. This is Large ribosomal subunit protein uL3 from Treponema denticola (strain ATCC 35405 / DSM 14222 / CIP 103919 / JCM 8153 / KCTC 15104).